The primary structure comprises 237 residues: Probable transcriptional regulatory protein WS1016 (237 aa).

Belongs to the TACO1 family.

Its subcellular location is the cytoplasm. This Wolinella succinogenes (strain ATCC 29543 / DSM 1740 / CCUG 13145 / JCM 31913 / LMG 7466 / NCTC 11488 / FDC 602W) (Vibrio succinogenes) protein is Probable transcriptional regulatory protein WS1016.